The chain runs to 636 residues: Basic helix-loop-helix ARNT-like protein 2 (636 aa).

Residues 25 to 62 (VSSRVSPGTRPTAMGSFSSHMTEFPRKRKGSDSDPSQS) are disordered. Positions 46–258 (TEFPRKRKGS…SPREKLIDAK (213 aa)) are interaction with PER2. The Nuclear localization signal signature appears at 49–54 (PRKRKG). A bHLH domain is found at 107-160 (AFREAHSQTEKRRRDKMNNLIEELSAMIPQCNPMARKLDKLTVLRMAVQHLRSL). The Nuclear export signal 1 motif lies at 177-187 (LQDNELRHLIL). Residues 178 to 250 (QDNELRHLIL…EQLSSFDISP (73 aa)) enclose the PAS 1 domain. A Glycyl lysine isopeptide (Lys-Gly) (interchain with G-Cter in SUMO2 and SUMO3) cross-link involves residue Lys-287. Lys-294 participates in a covalent cross-link: Glycyl lysine isopeptide (Lys-Gly) (interchain with G-Cter in SUMO2). The PAS 2 domain occupies 357–427 (VPQNSGEINV…DKHKAVLQSK (71 aa)). The Nuclear export signal 2 motif lies at 392–400 (LGYLPQELL). A PAC domain is found at 432–475 (TDSYKFRAKDGSFVTLKSQWFSFTNPWTKELEYIVSVNTLVLGH).

As to quaternary structure, component of the circadian core oscillator, which includes the CRY proteins, CLOCK, or NPAS2, BMAL1 or BMAL2, CSNK1D and/or CSNK1E, TIMELESS and the PER proteins. Interacts directly with CLOCK to form the BMAL2-CLOCK transactivator. Can form heterodimers or homodimers which interact directly with CLOCK to form the transcription activator. Interacts with NPAS2 and HIF1A. Interacts with PER2. In terms of tissue distribution, expressed in fetal brain. Highly expressed in brain and placenta. Lower levels in heart, liver, thymus, kidney and lung. Located to endothelial cells and neuronal cells of the suprachiasmatic nucleus (SCN). Also detected in endothelial cells of the heart, lung and kidney. In the brain, specifically expressed in the thalamus, hippocampus and amygdala.

It is found in the nucleus. In terms of biological role, transcriptional activator which forms a core component of the circadian clock. The circadian clock, an internal time-keeping system, regulates various physiological processes through the generation of approximately 24 hour circadian rhythms in gene expression, which are translated into rhythms in metabolism and behavior. It is derived from the Latin roots 'circa' (about) and 'diem' (day) and acts as an important regulator of a wide array of physiological functions including metabolism, sleep, body temperature, blood pressure, endocrine, immune, cardiovascular, and renal function. Consists of two major components: the central clock, residing in the suprachiasmatic nucleus (SCN) of the brain, and the peripheral clocks that are present in nearly every tissue and organ system. Both the central and peripheral clocks can be reset by environmental cues, also known as Zeitgebers (German for 'timegivers'). The predominant Zeitgeber for the central clock is light, which is sensed by retina and signals directly to the SCN. The central clock entrains the peripheral clocks through neuronal and hormonal signals, body temperature and feeding-related cues, aligning all clocks with the external light/dark cycle. Circadian rhythms allow an organism to achieve temporal homeostasis with its environment at the molecular level by regulating gene expression to create a peak of protein expression once every 24 hours to control when a particular physiological process is most active with respect to the solar day. Transcription and translation of core clock components (CLOCK, NPAS2, BMAL1, BMAL2, PER1, PER2, PER3, CRY1 and CRY2) plays a critical role in rhythm generation, whereas delays imposed by post-translational modifications (PTMs) are important for determining the period (tau) of the rhythms (tau refers to the period of a rhythm and is the length, in time, of one complete cycle). A diurnal rhythm is synchronized with the day/night cycle, while the ultradian and infradian rhythms have a period shorter and longer than 24 hours, respectively. Disruptions in the circadian rhythms contribute to the pathology of cardiovascular diseases, cancer, metabolic syndromes and aging. A transcription/translation feedback loop (TTFL) forms the core of the molecular circadian clock mechanism. Transcription factors, CLOCK or NPAS2 and BMAL1 or BMAL2, form the positive limb of the feedback loop, act in the form of a heterodimer and activate the transcription of core clock genes and clock-controlled genes (involved in key metabolic processes), harboring E-box elements (5'-CACGTG-3') within their promoters. The core clock genes: PER1/2/3 and CRY1/2 which are transcriptional repressors form the negative limb of the feedback loop and interact with the CLOCK|NPAS2-BMAL1|BMAL2 heterodimer inhibiting its activity and thereby negatively regulating their own expression. This heterodimer also activates nuclear receptors NR1D1/2 and RORA/B/G, which form a second feedback loop and which activate and repress BMAL1 transcription, respectively. The CLOCK-BMAL2 heterodimer activates the transcription of SERPINE1/PAI1 and BHLHE40/DEC1. The chain is Basic helix-loop-helix ARNT-like protein 2 from Homo sapiens (Human).